A 337-amino-acid chain; its full sequence is Anthranilate phosphoribosyltransferase (337 aa).

Residues Gly80, 83 to 84, Thr88, 90 to 93, 108 to 116, and Ser120 each bind 5-phospho-alpha-D-ribose 1-diphosphate; these read GD, NIST, and KHGNRAVSS. Position 80 (Gly80) interacts with anthranilate. Ser92 provides a ligand contact to Mg(2+). Position 111 (Asn111) interacts with anthranilate. Arg166 is a binding site for anthranilate. Mg(2+) is bound by residues Asp224 and Glu225.

Belongs to the anthranilate phosphoribosyltransferase family. Homodimer. The cofactor is Mg(2+).

The enzyme catalyses N-(5-phospho-beta-D-ribosyl)anthranilate + diphosphate = 5-phospho-alpha-D-ribose 1-diphosphate + anthranilate. The protein operates within amino-acid biosynthesis; L-tryptophan biosynthesis; L-tryptophan from chorismate: step 2/5. Its function is as follows. Catalyzes the transfer of the phosphoribosyl group of 5-phosphorylribose-1-pyrophosphate (PRPP) to anthranilate to yield N-(5'-phosphoribosyl)-anthranilate (PRA). This is Anthranilate phosphoribosyltransferase from Anaeromyxobacter sp. (strain Fw109-5).